Consider the following 585-residue polypeptide: Poly(A) RNA polymerase, mitochondrial (585 aa).

The N-terminal 37 residues, 1-37 (MAARGVGLLTRLPVCSQRRNRIPRSISRLLSCPGTIA), are a transit peptide targeting the mitochondrion. K90 is subject to N6-acetyllysine. Residues 107-109 (YES) and 244-245 (GC) contribute to the ATP site. Mg(2+)-binding residues include D246 and D248. The PAP-associated domain occupies 441–486 (ELLIKEFFEYFGNFAFNKNSINIRQGREQNKPDSSPLYIQNPFETS). The tract at residues 537–585 (PGSGHTSLSRKKKKKPMSEKVKGLLASIKSNSPDSSTDTSGKRTISTQA) is disordered. Positions 564 to 585 (IKSNSPDSSTDTSGKRTISTQA) are enriched in polar residues.

Belongs to the DNA polymerase type-B-like family. In terms of assembly, homodimer. Mg(2+) serves as cofactor. It depends on Mn(2+) as a cofactor.

It is found in the cytoplasm. It localises to the mitochondrion. It catalyses the reaction RNA(n) + ATP = RNA(n)-3'-adenine ribonucleotide + diphosphate. Polymerase that creates the 3' poly(A) tail of mitochondrial transcripts. Can use all four nucleotides, but has higher activity with ATP and UTP (in vitro). Plays a role in replication-dependent histone mRNA degradation. May be involved in the terminal uridylation of mature histone mRNAs before their degradation is initiated. Might be responsible for the creation of some UAA stop codons which are not encoded in mtDNA. The chain is Poly(A) RNA polymerase, mitochondrial (Mtpap) from Mus musculus (Mouse).